A 123-amino-acid polypeptide reads, in one-letter code: Protein TraJ (123 aa).

As to quaternary structure, monomer.

It localises to the cytoplasm. Transfer of plasmid RP4 during bacterial conjugation requires the plasmid-encoded TraJ protein, which binds to a 19-base pair invert sequence repetition within the transfer origin. TraJ protein is bound to only one side of the DNA helix. This nucleoprotein structure is the initial complex in the pathway to assemble a functional relaxosome. This Escherichia coli protein is Protein TraJ (traJ).